Consider the following 573-residue polypeptide: 2-succinyl-5-enolpyruvyl-6-hydroxy-3-cyclohexene-1-carboxylate synthase (573 aa).

This sequence belongs to the TPP enzyme family. MenD subfamily. In terms of assembly, homodimer. The cofactor is Mg(2+). It depends on Mn(2+) as a cofactor. Thiamine diphosphate serves as cofactor.

It carries out the reaction isochorismate + 2-oxoglutarate + H(+) = 5-enolpyruvoyl-6-hydroxy-2-succinyl-cyclohex-3-ene-1-carboxylate + CO2. Its pathway is quinol/quinone metabolism; 1,4-dihydroxy-2-naphthoate biosynthesis; 1,4-dihydroxy-2-naphthoate from chorismate: step 2/7. It functions in the pathway quinol/quinone metabolism; menaquinone biosynthesis. Its function is as follows. Catalyzes the thiamine diphosphate-dependent decarboxylation of 2-oxoglutarate and the subsequent addition of the resulting succinic semialdehyde-thiamine pyrophosphate anion to isochorismate to yield 2-succinyl-5-enolpyruvyl-6-hydroxy-3-cyclohexene-1-carboxylate (SEPHCHC). The chain is 2-succinyl-5-enolpyruvyl-6-hydroxy-3-cyclohexene-1-carboxylate synthase from Shewanella sp. (strain MR-4).